A 427-amino-acid polypeptide reads, in one-letter code: UDP-N-acetylglucosamine 1-carboxyvinyltransferase (427 aa).

22-23 (KN) serves as a coordination point for phosphoenolpyruvate. A UDP-N-acetyl-alpha-D-glucosamine-binding site is contributed by arginine 99. Residue cysteine 123 is the Proton donor of the active site. A 2-(S-cysteinyl)pyruvic acid O-phosphothioketal modification is found at cysteine 123. UDP-N-acetyl-alpha-D-glucosamine-binding positions include 128 to 132 (RPIDL), aspartate 313, and isoleucine 335.

It belongs to the EPSP synthase family. MurA subfamily.

Its subcellular location is the cytoplasm. The catalysed reaction is phosphoenolpyruvate + UDP-N-acetyl-alpha-D-glucosamine = UDP-N-acetyl-3-O-(1-carboxyvinyl)-alpha-D-glucosamine + phosphate. The protein operates within cell wall biogenesis; peptidoglycan biosynthesis. Its function is as follows. Cell wall formation. Adds enolpyruvyl to UDP-N-acetylglucosamine. In Novosphingobium aromaticivorans (strain ATCC 700278 / DSM 12444 / CCUG 56034 / CIP 105152 / NBRC 16084 / F199), this protein is UDP-N-acetylglucosamine 1-carboxyvinyltransferase.